The chain runs to 154 residues: Small ribosomal subunit protein bS6 (154 aa).

Positions 94–154 are disordered; that stretch reads VKQEGPLPTP…SSQGKESQKS (61 aa). Residues 103–112 show a composition bias toward polar residues; sequence PRSSNKGYNQ. Residues 113–139 are compositionally biased toward basic and acidic residues; the sequence is SEKKDIESIDSTNKSEFKEEANDKKTA. The span at 140–154 shows a compositional bias: polar residues; sequence TSESTSSQGKESQKS.

The protein belongs to the bacterial ribosomal protein bS6 family.

Its function is as follows. Binds together with bS18 to 16S ribosomal RNA. The sequence is that of Small ribosomal subunit protein bS6 from Prochlorococcus marinus subsp. pastoris (strain CCMP1986 / NIES-2087 / MED4).